A 398-amino-acid chain; its full sequence is Phosphoglycerate kinase (398 aa).

Residues 22–24 (DFN), Arg38, 61–64 (HLGR), Arg120, and Arg153 each bind substrate. ATP is bound by residues Lys206, Gly297, Glu328, and 354-357 (GGDT).

It belongs to the phosphoglycerate kinase family. In terms of assembly, monomer.

The protein localises to the cytoplasm. It catalyses the reaction (2R)-3-phosphoglycerate + ATP = (2R)-3-phospho-glyceroyl phosphate + ADP. The protein operates within carbohydrate degradation; glycolysis; pyruvate from D-glyceraldehyde 3-phosphate: step 2/5. The sequence is that of Phosphoglycerate kinase from Nautilia profundicola (strain ATCC BAA-1463 / DSM 18972 / AmH).